We begin with the raw amino-acid sequence, 289 residues long: Epoxyqueuosine reductase (289 aa).

Catalysis depends on D111, which acts as the Proton donor. In terms of domain architecture, 4Fe-4S ferredoxin-type spans 156–185 (QGDRPHSQHCGTCTRCLEACPTQAIVEPFV). [4Fe-4S] cluster is bound by residues C165, C168, C171, C175, C191, C219, C222, and C226.

This sequence belongs to the QueG family. As to quaternary structure, monomer. The cofactor is cob(II)alamin. [4Fe-4S] cluster is required as a cofactor.

The protein resides in the cytoplasm. The catalysed reaction is epoxyqueuosine(34) in tRNA + AH2 = queuosine(34) in tRNA + A + H2O. Its pathway is tRNA modification; tRNA-queuosine biosynthesis. Functionally, catalyzes the conversion of epoxyqueuosine (oQ) to queuosine (Q), which is a hypermodified base found in the wobble positions of tRNA(Asp), tRNA(Asn), tRNA(His) and tRNA(Tyr). The polypeptide is Epoxyqueuosine reductase (Synechocystis sp. (strain ATCC 27184 / PCC 6803 / Kazusa)).